A 215-amino-acid polypeptide reads, in one-letter code: Glycerol-3-phosphate acyltransferase (215 aa).

The next 6 membrane-spanning stretches (helical) occupy residues 3–23 (LILL…LWIG), 42–61 (TNTF…LIDI), 68–90 (TLLP…FAVL), 110–130 (AGVL…VFVL), 134–154 (LFSM…ISVL), and 162–182 (LLPG…AIII).

It belongs to the PlsY family. Probably interacts with PlsX.

The protein localises to the cell membrane. It carries out the reaction an acyl phosphate + sn-glycerol 3-phosphate = a 1-acyl-sn-glycero-3-phosphate + phosphate. It participates in lipid metabolism; phospholipid metabolism. Its function is as follows. Catalyzes the transfer of an acyl group from acyl-phosphate (acyl-PO(4)) to glycerol-3-phosphate (G3P) to form lysophosphatidic acid (LPA). This enzyme utilizes acyl-phosphate as fatty acyl donor, but not acyl-CoA or acyl-ACP. This Streptococcus equi subsp. zooepidemicus (strain H70) protein is Glycerol-3-phosphate acyltransferase.